The primary structure comprises 223 residues: Cytotoxic T-lymphocyte protein 4 (223 aa).

An N-terminal signal peptide occupies residues methionine 1–cysteine 35. Residues lysine 36 to aspartate 161 are Extracellular-facing. In terms of domain architecture, Ig-like V-type spans histidine 39–tyrosine 140. A homodimerization region spans residues valine 46 to serine 50. 2 disulfides stabilise this stretch: cysteine 58–cysteine 129 and cysteine 85–cysteine 103. The N-linked (GlcNAc...) asparagine glycan is linked to asparagine 113. The important for interaction with CD80 and CD86 stretch occupies residues methionine 134–tyrosine 139. Asparagine 145 carries an N-linked (GlcNAc...) asparagine glycan. Residues tyrosine 150 to glutamate 155 form a homodimerization region. Residues phenylalanine 162–threonine 182 form a helical membrane-spanning segment. Residues alanine 183 to asparagine 223 are Cytoplasmic-facing. Tyrosine 201 carries the post-translational modification Phosphotyrosine; by TXK and JAK2.

In terms of assembly, homodimer; disulfide-linked. Binds to CD80/B7-1 and CD86/B7.2. Interacts with ICOSLG. In terms of processing, N-glycosylation is important for dimerization. Post-translationally, phosphorylation at Tyr-201 prevents binding to the AP-2 adapter complex, blocks endocytosis, and leads to retention of CTLA4 on the cell surface. In terms of tissue distribution, widely expressed with highest levels in lymphoid tissues. Detected in activated T-cells where expression levels are 30- to 50-fold less than CD28, the stimulatory coreceptor, on the cell surface following activation.

It localises to the cell membrane. Functionally, inhibitory receptor acting as a major negative regulator of T-cell responses. The affinity of CTLA4 for its natural B7 family ligands, CD80 and CD86, is considerably stronger than the affinity of their cognate stimulatory coreceptor CD28. This Homo sapiens (Human) protein is Cytotoxic T-lymphocyte protein 4 (CTLA4).